The primary structure comprises 233 residues: ATP-dependent dethiobiotin synthetase BioD (233 aa).

An ATP-binding site is contributed by 12-17; the sequence is EVGKTY. Mg(2+) is bound at residue threonine 16. Residue lysine 37 is part of the active site. Residues aspartate 54, 120 to 123, and 186 to 187 contribute to the ATP site; these read EGAG and ND. Mg(2+) is bound by residues aspartate 54 and glutamate 120.

Belongs to the dethiobiotin synthetase family. As to quaternary structure, homodimer. It depends on Mg(2+) as a cofactor.

It is found in the cytoplasm. It carries out the reaction (7R,8S)-7,8-diammoniononanoate + CO2 + ATP = (4R,5S)-dethiobiotin + ADP + phosphate + 3 H(+). It functions in the pathway cofactor biosynthesis; biotin biosynthesis; biotin from 7,8-diaminononanoate: step 1/2. Its function is as follows. Catalyzes a mechanistically unusual reaction, the ATP-dependent insertion of CO2 between the N7 and N8 nitrogen atoms of 7,8-diaminopelargonic acid (DAPA, also called 7,8-diammoniononanoate) to form a ureido ring. The protein is ATP-dependent dethiobiotin synthetase BioD of Alteromonas mediterranea (strain DSM 17117 / CIP 110805 / LMG 28347 / Deep ecotype).